A 555-amino-acid chain; its full sequence is Urocanate hydratase (555 aa).

Residues 53–54 (GG), Gln131, 177–179 (GMG), Glu197, Arg202, 243–244 (NA), 264–268 (QTSAH), 274–275 (YL), and Tyr323 each bind NAD(+). Cys411 is an active-site residue. An NAD(+)-binding site is contributed by Gly493.

The protein belongs to the urocanase family. It depends on NAD(+) as a cofactor.

The protein localises to the cytoplasm. The enzyme catalyses 4-imidazolone-5-propanoate = trans-urocanate + H2O. It functions in the pathway amino-acid degradation; L-histidine degradation into L-glutamate; N-formimidoyl-L-glutamate from L-histidine: step 2/3. Its function is as follows. Catalyzes the conversion of urocanate to 4-imidazolone-5-propionate. This Maricaulis maris (strain MCS10) (Caulobacter maris) protein is Urocanate hydratase.